The following is an 82-amino-acid chain: RNA-binding protein GTNG_0100 (82 aa).

Belongs to the eukaryotic ribosomal protein eL8 family.

The chain is RNA-binding protein GTNG_0100 from Geobacillus thermodenitrificans (strain NG80-2).